The following is a 474-amino-acid chain: Citrate synthase, mitochondrial (474 aa).

A mitochondrion-targeting transit peptide spans 1-35 (MASTLRLSTSALRSSTLAGKPVVQSVAFNGLRCYS). Catalysis depends on residues His-310, His-356, and Asp-411.

This sequence belongs to the citrate synthase family.

It localises to the mitochondrion matrix. It carries out the reaction oxaloacetate + acetyl-CoA + H2O = citrate + CoA + H(+). It functions in the pathway carbohydrate metabolism; tricarboxylic acid cycle; isocitrate from oxaloacetate: step 1/2. This chain is Citrate synthase, mitochondrial (citA), found in Emericella nidulans (strain FGSC A4 / ATCC 38163 / CBS 112.46 / NRRL 194 / M139) (Aspergillus nidulans).